A 318-amino-acid polypeptide reads, in one-letter code: uncharacterized protein (318 aa).

Belongs to the glycosyltransferase 2 family.

This is an uncharacterized protein from Rickettsia typhi (strain ATCC VR-144 / Wilmington).